Reading from the N-terminus, the 249-residue chain is Glucosamine-6-phosphate deaminase (249 aa).

The active-site Proton acceptor; for enolization step is Asp67. Asn136 acts as the For ring-opening step in catalysis. His138 functions as the Proton acceptor; for ring-opening step in the catalytic mechanism. The active-site For ring-opening step is the Glu143.

It belongs to the glucosamine/galactosamine-6-phosphate isomerase family. NagB subfamily.

The enzyme catalyses alpha-D-glucosamine 6-phosphate + H2O = beta-D-fructose 6-phosphate + NH4(+). Its pathway is amino-sugar metabolism; N-acetylneuraminate degradation; D-fructose 6-phosphate from N-acetylneuraminate: step 5/5. Its function is as follows. Catalyzes the reversible isomerization-deamination of glucosamine 6-phosphate (GlcN6P) to form fructose 6-phosphate (Fru6P) and ammonium ion. In Clostridium botulinum (strain Alaska E43 / Type E3), this protein is Glucosamine-6-phosphate deaminase.